A 490-amino-acid polypeptide reads, in one-letter code: Selenium-binding protein 1 (490 aa).

Residue Ala2 is modified to N-acetylalanine. Residues Cys21 and Cys22 each coordinate selenite.

This sequence belongs to the selenium-binding protein family. In terms of assembly, interacts with GRXS14 and GRXS16. Interacts with DALL3. In terms of tissue distribution, expressed in seedlings, roots, leaves, stems and flowers.

Binds cadmium and mediates lower sensitivity to stress requiring glutathione (GSH) for tolerance (e.g. cadmium, selenate, and hydrogen peroxide excess). Probably helps to detoxify cadmium potentially through direct binding. Binds selenium, cadmium, zinc and nickel in vitro. This Arabidopsis thaliana (Mouse-ear cress) protein is Selenium-binding protein 1.